The chain runs to 223 residues: Glutathione S-transferase A2 (223 aa).

Position 2 is an N-acetylalanine (Ala-2). Residues 3–83 (GKPKLHYFNG…YIATKYNLYG (81 aa)) form the GST N-terminal domain. Lys-4 carries the N6-succinyllysine modification. Glutathione-binding positions include Tyr-9, Arg-45, 54–55 (QV), and 67–68 (QT). The GST C-terminal domain occupies 85 to 208 (DMKERALIDM…QPGSQRKPPM (124 aa)).

This sequence belongs to the GST superfamily. Alpha family. As to quaternary structure, homodimer. In terms of tissue distribution, expressed in corpus luteum, adrenal gland, testis, liver, lung, thyroid and kidney.

Its subcellular location is the cytoplasm. The catalysed reaction is RX + glutathione = an S-substituted glutathione + a halide anion + H(+). Its function is as follows. Conjugation of reduced glutathione to a wide number of exogenous and endogenous hydrophobic electrophiles. This chain is Glutathione S-transferase A2 (GSTA2), found in Bos taurus (Bovine).